Consider the following 25-residue polypeptide: Caerin-1.4 (25 aa).

Leu-25 carries the post-translational modification Leucine amide.

It belongs to the frog skin active peptide (FSAP) family. Caerin subfamily. In terms of tissue distribution, expressed by the skin parotoid and/or rostral glands.

The protein localises to the secreted. Functionally, antibacterial peptide, that adopts an alpha helical conformation which can disrupt bacterial membranes. Each caerin displays a different antimicrobial specificity. In Ranoidea caerulea (Green tree frog), this protein is Caerin-1.4.